The sequence spans 103 residues: Large ribosomal subunit protein bL21 (103 aa).

The protein belongs to the bacterial ribosomal protein bL21 family. In terms of assembly, part of the 50S ribosomal subunit. Contacts protein L20.

In terms of biological role, this protein binds to 23S rRNA in the presence of protein L20. In Photobacterium profundum (strain SS9), this protein is Large ribosomal subunit protein bL21.